The sequence spans 201 residues: Large ribosomal subunit protein uL4 (201 aa).

The segment at 44-71 (RAQKTRAEVTGSGKKPWRQKGTGRARSG) is disordered.

The protein belongs to the universal ribosomal protein uL4 family. In terms of assembly, part of the 50S ribosomal subunit.

Its function is as follows. One of the primary rRNA binding proteins, this protein initially binds near the 5'-end of the 23S rRNA. It is important during the early stages of 50S assembly. It makes multiple contacts with different domains of the 23S rRNA in the assembled 50S subunit and ribosome. Forms part of the polypeptide exit tunnel. This Shigella flexneri serotype 5b (strain 8401) protein is Large ribosomal subunit protein uL4.